We begin with the raw amino-acid sequence, 308 residues long: MIKPNRLANKNFLSSLDITTDEVFHILDLSKKFKNKKLNINLHNKVLGLIFDKSSTRTRVSFQVAMSRLGGTTIDLNPTTSQIERGEPIKDTARVLSRYCDVIAIRTFNHADLEEYARWSTKPVINALTDLEHPCQALADFLTIYEEFLDFKDVVLTFIGDGNNVANSLILCGALLGVEVRIACPKGYEPNSMVINKAYEIYKNRNLLKITNDPDTAVLGANVLYTDVWSSMGEENQKAEKDKVFNGFTIDNDLVSKADKEAIILHCLPAYRSKEITDEVFESKKNRIFDQAENRMHVQQALLSCLLY.

Carbamoyl phosphate is bound by residues serine 55–threonine 58, glutamine 82, arginine 106, and histidine 133–glutamine 136. Residues asparagine 164, aspartate 227, and serine 231–methionine 232 each bind L-ornithine. Carbamoyl phosphate is bound by residues cysteine 267–leucine 268 and arginine 295.

Belongs to the aspartate/ornithine carbamoyltransferase superfamily. OTCase family.

The protein localises to the cytoplasm. It carries out the reaction carbamoyl phosphate + L-ornithine = L-citrulline + phosphate + H(+). The protein operates within amino-acid biosynthesis; L-arginine biosynthesis; L-arginine from L-ornithine and carbamoyl phosphate: step 1/3. In terms of biological role, reversibly catalyzes the transfer of the carbamoyl group from carbamoyl phosphate (CP) to the N(epsilon) atom of ornithine (ORN) to produce L-citrulline. The polypeptide is Ornithine carbamoyltransferase (Prochlorococcus marinus subsp. pastoris (strain CCMP1986 / NIES-2087 / MED4)).